We begin with the raw amino-acid sequence, 288 residues long: Borealin (288 aa).

Residues 1–58 (MAPKKRSSRGTRTNTLRSRKLASFLKDFDREVQVRTKQIESDRQTLLKEVENLYNIEV) form a required for interaction with INCENP region. The required for centromere localization stretch occupies residues 1 to 88 (MAPKKRSSRG…NRQALEEAAT (88 aa)). Residues 1–149 (MAPKKRSSRG…RKSHKNLRSA (149 aa)) are required for interaction with SENP3. A required to form a minimal CPC core complex that localizes to the central spindle and midbody and properly executes the role of the CPC during cytokinesis region spans residues 10–109 (GTRTNTLRSR…TAEAIQTPLK (100 aa)). The required for interaction with INCENP and BIRC5 stretch occupies residues 20 to 78 (KLASFLKDFDREVQVRTKQIESDRQTLLKEVENLYNIEVLRLPKALQVMKWLDYFALGG). A Phosphothreonine; by TTK modification is found at T88. R91 is subject to Citrulline. T94 is modified (phosphothreonine; by TTK). T106 carries the phosphothreonine modification. Phosphoserine is present on S110. Positions 124–134 (KEEEEDEEEEG) are enriched in acidic residues. The disordered stretch occupies residues 124-173 (KEEEEDEEEEGGGGGGRKSHKNLRSARVKRCPPSKKRTQSIQGRSRSKRL). Residues 140 to 161 (RKSHKNLRSARVKRCPPSKKRT) are compositionally biased toward basic residues. Residue K144 forms a Glycyl lysine isopeptide (Lys-Gly) (interchain with G-Cter in SUMO2) linkage. A Phosphoserine; by AURKB modification is found at S174. Phosphothreonine occurs at positions 197 and 212. S227, S232, S246, and S252 each carry phosphoserine.

The protein belongs to the borealin family. May form homooligomers and homodimers. Component of the chromosomal passenger complex (CPC) composed of at least BIRC5/survivin, CDCA8/borealin, INCENP, AURKB or AURKC; in the complex forms a triple-helix bundle-based subcomplex with INCENP and BIRC5. Interacts with SENP3, UBE2I and RANBP2. Interacts (phosphorylated) with SGO1 and SGO2; the association is dependent on CDK1. Phosphorylated by TTK, essentially at Thr-88 and Thr-94. Phosphorylation (probably by CDK1) promotes targeting of the CPC to centromeric DNA. Post-translationally, sumoylated by UBE2I and RANBP2. Desumoylated by SENP3 through the removal of SUMO2 and SUMO3. In terms of processing, citrullinated by PADI4.

It localises to the nucleus. The protein resides in the nucleolus. The protein localises to the cytoplasm. It is found in the chromosome. Its subcellular location is the centromere. It localises to the cytoskeleton. The protein resides in the spindle. Its function is as follows. Component of the chromosomal passenger complex (CPC), a complex that acts as a key regulator of mitosis. The CPC complex has essential functions at the centromere in ensuring correct chromosome alignment and segregation and is required for chromatin-induced microtubule stabilization and spindle assembly. In the complex, it may be required to direct the CPC to centromeric DNA. The protein is Borealin (Cdca8) of Rattus norvegicus (Rat).